A 630-amino-acid chain; its full sequence is A-type voltage-gated potassium channel KCND2 (630 aa).

The Cytoplasmic portion of the chain corresponds to 1–184 (MAAGVAAWLP…FENPHTSTMA (184 aa)). The interaction with KCNIP1, KCNIP2, and other family members stretch occupies residues 2 to 20 (AAGVAAWLPFARAAAIGWM). T38 is modified (phosphothreonine). The segment at 71–90 (ERDFFYHPETQQYFFDRDPD) is interaction with KCNIP1. Zn(2+) contacts are provided by H105, C111, C132, and C133. The chain crosses the membrane as a helical span at residues 185–206 (LVFYYVTGFFIAVSVIANVVET). Residues 207–226 (VPCGSSPGHIKELPCGERYA) lie on the Extracellular side of the membrane. The helical transmembrane segment at 227–249 (VAFFCLDTACVMIFTVEYLLRLA) threads the bilayer. Residues 250–256 (AAPSRYR) are Cytoplasmic-facing. A helical membrane pass occupies residues 257 to 281 (FVRSVMSIIDVVAILPYYIGLVMTD). The Extracellular segment spans residues 282–287 (NEDVSG). Residues 288-307 (AFVTLRVFRVFRIFKFSRHS) form a helical; Voltage-sensor membrane-spanning segment. At 308–321 (QGLRILGYTLKSCA) the chain is on the cytoplasmic side. Residues 308–321 (QGLRILGYTLKSCA) are S4-S5 linker. A helical membrane pass occupies residues 322-345 (SELGFLLFSLTMAIIIFATVMFYA). The Extracellular segment spans residues 346 to 357 (EKGSSASKFTSI). Residues 358-369 (PAAFWYTIVTMT) constitute an intramembrane region (helical). K(+)-binding residues include T370, L371, G372, and Y373. Positions 370-375 (TLGYGD) match the Selectivity filter motif. Residues 370 to 377 (TLGYGDMV) lie within the membrane without spanning it. The Extracellular segment spans residues 378 to 380 (PKT). Residues 381–403 (IAGKIFGSICSLSGVLVIALPVP) form a helical membrane-spanning segment. Residues 404–630 (VIVSNFSRIY…GGNIVRVSAL (227 aa)) are Cytoplasmic-facing. Phosphoserine is present on S438. Residues 474–489 (FETQHHHLLHCLEKTT) are required for dendritic targeting. The segment at 474-630 (FETQHHHLLH…GGNIVRVSAL (157 aa)) is important for normal channel activation and inactivation, for interaction with KCNIP2, and probably other family members as well. A phosphoserine mark is found at S548, S552, S572, and S575. The interval 600-623 (IPTPPVTTPEGDDRPESPEYSGGN) is disordered. A phosphothreonine mark is found at T602 and T607. S616 carries the post-translational modification Phosphoserine. A PDZ-binding motif is present at residues 627 to 630 (VSAL).

Belongs to the potassium channel family. D (Shal) (TC 1.A.1.2) subfamily. Kv4.2/KCND2 sub-subfamily. In terms of assembly, homotetramer or heterotetramer with KCND1 or KCND3. Associates with the regulatory subunits KCNIP1, KCNIP2, KCNIP3 and KCNIP4. Interacts with DPP6, DPP10, DLG4 and DLG1. In vivo, probably exists as heteromeric complex containing variable proportions of KCND1, KCND2, KCND3, KCNIP1, KCNIP2, KCNIP3, KCNIP4, DPP6 and DPP10. The tetrameric channel can associate with up to four regulatory subunits, such as KCNIP2 or KCNIP4. Interaction with KCNIP3 promotes tetramerization and formation of a functional potassium channel. Interaction with four KCNIP4 chains does not reduce interaction with DPP10. Probably part of a complex consisting of KCNIP1, KCNIP2 isoform 3 and KCND2. Interacts with FLNA and FLNC. Interacts with NCS1/FREQ. Identified in a complex with cAMP-dependent protein kinase (PKA), CAV3, AKAP6 and KCND3 in cardiac myocytes. Interacts (via S1 and S2 helices) with DPP6; this interaction stabilizes the conformation of the S1-S2 helices and facilitates S4 conformational change, including S4 sliding up and down, thereby accelerating activation, inactivation, and recovery. In terms of processing, phosphorylation at Ser-438 in response to MAPK activation is increased in stimulated dendrites. Interaction with KCNIP2 and DPP6 propomtes phosphorylation by PKA at Ser-552. Phosphorylation at Ser-552 has no effect on interaction with KCNIP3, but is required for the regulation of channel activity by KCNIP3. Phosphorylation at Ser-552 leads to KCND2 internalization. Phosphorylated by MAPK in response to signaling via the metabotropic glutamate receptor GRM5. Phosphorylation at Ser-616 is required for the down-regulation of neuronal A-type currents in response to signaling via GRM5. Detected in brain frontal cortex.

The protein resides in the cell membrane. The protein localises to the cell projection. It localises to the dendrite. Its subcellular location is the synapse. It is found in the perikaryon. The protein resides in the postsynaptic cell membrane. The protein localises to the dendritic spine. It localises to the sarcolemma. Its subcellular location is the cell junction. It is found in the membrane. The protein resides in the caveola. The catalysed reaction is K(+)(in) = K(+)(out). Voltage-gated potassium channel that mediates transmembrane potassium transport in excitable membranes, primarily in the brain. Mediates the major part of the dendritic A-type current I(SA) in brain neurons. This current is activated at membrane potentials that are below the threshold for action potentials. It regulates neuronal excitability, prolongs the latency before the first spike in a series of action potentials, regulates the frequency of repetitive action potential firing, shortens the duration of action potentials and regulates the back-propagation of action potentials from the neuronal cell body to the dendrites. Contributes to the regulation of the circadian rhythm of action potential firing in suprachiasmatic nucleus neurons, which regulates the circadian rhythm of locomotor activity. Functions downstream of the metabotropic glutamate receptor GRM5 and plays a role in neuronal excitability and in nociception mediated by activation of GRM5. Mediates the transient outward current I(to) in rodent heart left ventricle apex cells, but not in human heart, where this current is mediated by another family member. Forms tetrameric potassium-selective channels through which potassium ions pass in accordance with their electrochemical gradient. The channel alternates between opened and closed conformations in response to the voltage difference across the membrane. Can form functional homotetrameric channels and heterotetrameric channels that contain variable proportions of KCND2 and KCND3; channel properties depend on the type of pore-forming alpha subunits that are part of the channel. In vivo, membranes probably contain a mixture of heteromeric potassium channel complexes. Interaction with specific isoforms of the regulatory subunits KCNIP1, KCNIP2, KCNIP3 or KCNIP4 strongly increases expression at the cell surface and thereby increases channel activity; it modulates the kinetics of channel activation and inactivation, shifts the threshold for channel activation to more negative voltage values, shifts the threshold for inactivation to less negative voltages and accelerates recovery after inactivation. Likewise, interaction with DPP6 or DPP10 promotes expression at the cell membrane and regulates both channel characteristics and activity. Upon depolarization, the channel goes from a resting closed state (C state) to an activated but non-conducting state (C* state), from there, the channel may either inactivate (I state) or open (O state). The polypeptide is A-type voltage-gated potassium channel KCND2 (Oryctolagus cuniculus (Rabbit)).